Consider the following 494-residue polypeptide: MIKFALALTLCLAGASLSLAQHNPQWWGNRNTIVHLFEWKWSDIAEECETFLAPRGFAGVQVSPVNENIISAGRPWWERYQPISYKLTTRSGNEEEFADMVRRCNDVGIRIYVDVLLNHMSGDFDGVAVGTAGTEAEPSKKSFPGVPYSAQDFHPSCEITDWNDRFQVQQCELVGLKDLNQHSDYVRSKLIEFLDHLIELGVAGFRVDAAKHMAAEDLEYIYGSLSNLNIEHGFPHNARPFIFQEVIDHGHETVSREEYNGLGAVTEFRFSEEIGNAFRGNNALKWLQSWGTDWGFLSSEQALTFVDNHDNQRDMGSVLNYKSPRQYKMATAFHLAYPYGISRVMSSFAFDDHDTPPPQDAQENIISPEFDDDGACVNGWICEHRWRQIYAMVGFKNAVRDTQLSEWWDNGDNQISFCRGNKGFLAVNNNQYDLSQELNTCLPAGEYCDVISGSLIDGACTGKSVTVNEHGYGYIHIGSDDFDGVLALHVNAKV.

Positions 1-20 (MIKFALALTLCLAGASLSLA) are cleaved as a signal peptide. Q21 is modified (pyrrolidone carboxylic acid). Residues C48 and C104 are joined by a disulfide bond. Ca(2+) contacts are provided by N118, Q169, and D178. C157 and C171 form a disulfide bridge. Residue R206 participates in chloride binding. D208 serves as the catalytic Nucleophile. H212 is a binding site for Ca(2+). E245 functions as the Proton donor in the catalytic mechanism. Residues N308 and R343 each coordinate chloride. 3 disulfide bridges follow: C376–C382, C418–C441, and C448–C460.

This sequence belongs to the glycosyl hydrolase 13 family. Monomer. Ca(2+) is required as a cofactor. Requires chloride as cofactor.

It localises to the secreted. The enzyme catalyses Endohydrolysis of (1-&gt;4)-alpha-D-glucosidic linkages in polysaccharides containing three or more (1-&gt;4)-alpha-linked D-glucose units.. This Drosophila kikkawai (Fruit fly) protein is Alpha-amylase-related protein (Amyrel).